Consider the following 1317-residue polypeptide: ABC transporter C family member 14 (1317 aa).

The ABC transmembrane type-1 1 domain occupies 119-404 (NKYALISNIF…LPEDIYKAIG (286 aa)). The next 5 membrane-spanning stretches (helical) occupy residues 127–147 (IFIT…INYI), 156–176 (SILK…GQSI), 249–269 (ILIL…VGFG), 341–361 (VLFW…VLVS), and 375–395 (LDVT…LIYL). Positions 426–451 (ENNQNINFNNNNNNNNNNKNNNNNDD) are disordered. Residues 427–449 (NNQNINFNNNNNNNNNNKNNNNN) show a composition bias toward low complexity. The 221-residue stretch at 490 to 710 (ENEENIKINE…ISDKNDPNLI (221 aa)) folds into the ABC transporter 1 domain. 522 to 529 (GVVGSGKT) contributes to the ATP binding site. 5 helical membrane passes run 734-754 (YFSY…FFIG), 778-798 (DSFY…LLMI), 871-891 (LISI…LFII), 969-989 (LEVM…LFTS), and 992-1012 (GLAA…SWGV). An ABC transmembrane type-1 2 domain is found at 744 to 1027 (LFITISLFFI…LEVKMNSFQR (284 aa)). An ABC transporter 2 domain is found at 1071 to 1306 (IEFKNVEIKY…PNSKFNKLIK (236 aa)). 1105-1112 (GRTGAGKT) is a binding site for ATP.

The protein belongs to the ABC transporter superfamily. ABCC family. Conjugate transporter (TC 3.A.1.208) subfamily.

The protein resides in the membrane. This chain is ABC transporter C family member 14 (abcC14), found in Dictyostelium discoideum (Social amoeba).